The following is a 971-amino-acid chain: Endoplasmic reticulum calcium ATPase srcA (971 aa).

Residues 1 to 25 (MNNEALAEDPPTPLWELVLEQFKDQ) lie on the Cytoplasmic side of the membrane. The helical transmembrane segment at 26–46 (LVLILLGSAAVSFVLALFEEG) threads the bilayer. Residues 47 to 49 (DDW) lie on the Lumenal side of the membrane. Residues 50–70 (TAFVDPVVILTILILNAVVGV) traverse the membrane as a helical segment. The Cytoplasmic portion of the chain corresponds to 71 to 217 (TQESSAEKAI…PTPLKQKLND (147 aa)). The helical transmembrane segment at 218–238 (FGDMLAKVITVICVLVWLINV) threads the bilayer. The Lumenal portion of the chain corresponds to 239–262 (EHFNDPAHGGWAKGAIYYLKIAVS). The helical transmembrane segment at 263-283 (LGVAAIPEGLAVVITTCLALG) threads the bilayer. Ca(2+)-binding residues include V265, A266, I268, and E270. Over 284 to 718 (TRKMAAKNAV…GRSIYSNTQQ (435 aa)) the chain is Cytoplasmic. Residue D312 is the 4-aspartylphosphate intermediate of the active site. The Mg(2+) site is built by D312 and T314. The ATP site is built by T314, E402, R453, K473, R518, R637, and K643. Mg(2+) is bound at residue D662. ATP is bound at residue N665. The helical transmembrane segment at 719 to 741 (FIRYLISSNIGEVVSIFLTAALG) threads the bilayer. N727 and E730 together coordinate Ca(2+). The Lumenal portion of the chain corresponds to 742 to 750 (MPEALIPVQ). The chain crosses the membrane as a helical span at residues 751-770 (LLWVNLVTDGLPATALSFNP). The Ca(2+) site is built by N755, T758, and D759. Over 771-795 (PDHDVMRRAPRKRDEPLVGGWLLFR) the chain is Cytoplasmic. Residues 796 to 816 (YLAIGTYVGAATVFGYIWWFV) form a helical membrane-spanning segment. Residues 817 to 854 (YNPEGPQISFWQLSHFHKCSAQFPEIGCEMFSNEMSRS) are Lumenal-facing. A helical transmembrane segment spans residues 855–875 (ASTVSLSILVVIEMLNAMNAL). E867 is a binding site for Ca(2+). The Cytoplasmic portion of the chain corresponds to 876-891 (SSSESLLAFPLWNNMM). Residues 892–912 (LVYAIILSMTLHFAILYIPFL) form a helical membrane-spanning segment. At 913–917 (QTLFS) the chain is on the lumenal side. The chain crosses the membrane as a helical span at residues 918 to 938 (ILPLNWTEWKAVLAISAPVVA). At 939 to 971 (IDELLKYAERRLYTLPAIAGEQQNGVAFKPKKA) the chain is on the cytoplasmic side.

Belongs to the cation transport ATPase (P-type) (TC 3.A.3) family. Mg(2+) serves as cofactor.

The protein resides in the endoplasmic reticulum membrane. It carries out the reaction Ca(2+)(in) + ATP + H2O = Ca(2+)(out) + ADP + phosphate + H(+). Magnesium-dependent enzyme catalyzes the hydrolysis of ATP coupled with the translocation of calcium from the cytosol to the endoplasmic reticulum lumen. Its activity is coupled to the unfolded protein response (UPR) and Ca(2+) import into the endoplasmioc reticulum is important for redox homeostasis, virulence, cell wall biosynthesis, and resistance to antifungal compounds that inhibit Ca2+ signaling. With pmrA, promotes radial growth and conidiation. The chain is Endoplasmic reticulum calcium ATPase srcA (srcA) from Aspergillus fumigatus (strain ATCC MYA-4609 / CBS 101355 / FGSC A1100 / Af293) (Neosartorya fumigata).